Reading from the N-terminus, the 741-residue chain is MFYTFNAVMTDVVSAGRPARGQSTTTRSRNTQQSAPTSQNFRACRRCRQHRIKCSEKPCEPCRANNSKCVWTEEKPTAAVLTPISPANLAANRPMMAPAAGSTITKPIASHYASPTYTDGEDGGGEPWPLQHPCSCAQHPNTPNSCPSQSGDIRQQQIPCSQHASPASNASKTFHQFLEGLGMAVTAEEGELHQFPPLPSAEEGKTSTAAAGLLPSAPTASETLNWDGQLYFVRLFWMSLAPLFPIMPESEFEALYAADGPYLLGQRTIEGALINGMTALGIQCAEATGSGARILSCSPTAASRSSIEYFRRCRDVLRDQDTSTTTCVHTIRCYILLTLYHLQANQLEKAYYLAGLGVRRAHMGRFHLTPAAHSSARVADDRIRVWWLLSWLDVYCSLQLGRPAAVQRSSNPCPPPSSPPMRFTPMHADVVSRKEASLDNYRFVLSKLTMIVVEALDDVPVFQSLEEMHGSSTAGQSMARLSETIRQLETALDELPEQLLTRHGSRTPTNNGQTHRSRPTCSTMPHTNRQVTSSASSAALTVGLPDWLQRQRLILELHYLDACLVLQRPFVLWKQICSSDASITKHAESAFSRACSVLSMLHSIYSRSDILDRLTMVLPFIWNAIITIAAYVFVGSADDDKKTQLLKAMNNALAILEPLARINPDSLKVYQISQALAAELREASGGTDVVAMPPPPSAATSTSTTFTDDLFKSTFTGSLDLDEFLNDEVTMTDDFSELYSF.

The segment at glycine 16 to glutamine 39 is disordered. Low complexity predominate over residues arginine 20–serine 34. The zn(2)-C6 fungal-type DNA-binding region spans cysteine 44–cysteine 69. A disordered region spans residues histidine 139 to alanine 167. Residues threonine 473–leucine 500 are a coiled coil. Positions threonine 501–asparagine 528 are disordered. A compositionally biased stretch (polar residues) spans arginine 506–asparagine 528.

The protein localises to the nucleus. Transcription factor involved in regulation of gene cluster that mediates the biosynthesis of oosporein, a metabolite required for fungal virulence that acts by evading host immunity to facilitate fungal multiplication in insects. Binds oosporein cluster genes at a conserved 5'-CGGA-3' motif with the exception of OpS5. The presence of this motif in the OpS3 promoter would suggest the formation of a positive feedback loop for self-activation. This Beauveria bassiana (strain ARSEF 2860) (White muscardine disease fungus) protein is Oosporein cluster regulator OpS3.